Reading from the N-terminus, the 2193-residue chain is ATP-dependent helicase BRM (2193 aa).

Met-1 carries the post-translational modification N-acetylmethionine. A compositionally biased stretch (gly residues) spans 1–10 (MQSGGSGGGP). Disordered stretches follow at residues 1–126 (MQSG…QEGQ), 175–231 (MQDL…PGNM), 293–466 (QKAG…GFTK), 511–558 (SPAI…DNVG), and 580–649 (TSTD…ASAR). The span at 23-62 (ASTSSAASPSSSSSSVQQQQQQQQQQQQQQQLASRQQQQQ) shows a compositional bias: low complexity. Positions 38–58 (VQQQQQQQQQQQQQQQLASRQ) form a coiled coil. Residues 79-88 (GVQGMMGGGN) are compositionally biased toward gly residues. Composition is skewed to low complexity over residues 91 to 102 (SSPGSMQMPQQS), 110 to 126 (QQQQ…QEGQ), and 180 to 192 (PSSQ…SKPS). The segment covering 204-223 (ESSSQQRNETKSHPQQQVGT) has biased composition (polar residues). Residues 301–320 (ASQSPSIPISSQPASSSVVP) are compositionally biased toward low complexity. 4 stretches are compositionally biased toward polar residues: residues 325–339 (PHAN…QSGS), 347–358 (STGSFASTSSPR), 383–412 (QPTN…STKK), and 421–433 (QMQQ…TPTP). The span at 445–463 (SNSSLQSGQGTQQAQQRSG) shows a compositional bias: low complexity. A QLQ domain is found at 463-499 (GFTKQQLHVLKAQILAFRRLKKGEGSLPPELLQAISP). Composition is skewed to basic and acidic residues over residues 517–537 (VQDR…ECGK) and 611–621 (PRSDSTADKGK). Over residues 626-638 (DGSQSKVPPQANS) the composition is skewed to polar residues. The short motif at 705–712 (LKKINGLL) is the Nuclear localization signal 1 element. The stretch at 726 to 795 (VLRLQIEEKK…QKAVREKQLK (70 aa)) forms a coiled coil. The Helicase ATP-binding domain maps to 993 to 1158 (LSLYNNKLNG…WSLLNLLLPD (166 aa)). Residue 1006–1013 (DEMGLGKT) coordinates ATP. Positions 1109–1129 (DEAQRMKDRESVLARDLDRYR) form a coiled coil. The region spanning 1312-1489 (ILDRILIKLQ…QYKIDMADEV (178 aa)) is the Helicase C-terminal domain. Disordered stretches follow at residues 1583-1775 (SKKP…DEEQ) and 1789-1894 (LRPR…NAGA). Residues 1608–1617 (KRGRPKSKKI) are compositionally biased toward basic residues. The stretch at 1618–1638 (NYKEIEDDIAGYSEESSEERN) forms a coiled coil. Ser-1641 is modified (phosphoserine). Residues 1642–1657 (GNEEEGDIRQFDDDEL) show a composition bias toward acidic residues. Residues 1821–1832 (TVVDSHSSRQDQ) are compositionally biased toward basic and acidic residues. A compositionally biased stretch (low complexity) spans 1833–1842 (SDSSSRLRSV). Polar residues-rich tracts occupy residues 1848-1870 (ASTS…QLTV) and 1882-1892 (DGTSPISSSNA). Residues 1895 to 2005 (RMSHIIQKRC…NLFFDLLKMS (111 aa)) enclose the Bromo domain. Positions 1901 to 1908 (QKRCKIVI) match the Nuclear localization signal 2 motif. The segment covering 2022–2032 (GSAPTLVSTPT) has biased composition (polar residues). A disordered region spans residues 2022–2193 (GSAPTLVSTP…DSGKRRPSHL (172 aa)). At Ser-2137 the chain carries Phosphoserine. Residues 2149-2166 (LAQQQRWPNQPTHPNNSG) show a composition bias toward polar residues.

This sequence belongs to the SNF2/RAD54 helicase family. As to quaternary structure, interacts with SWI3B, SWI3C, H3 and H4, but not with SWI3A, SWI3D or BSH. Interacts with LFY. Interacts with REF6. Binds to FGT1. Highly expressed in inflorescences and leaves. Low expression in siliques, roots and seedlings. Detected in shoot apical meristem, root meristem, vascular tissue of developing leaves, petals, stamens filaments, anthers and carpels.

Its subcellular location is the nucleus. The catalysed reaction is ATP + H2O = ADP + phosphate + H(+). Its function is as follows. ATPase subunit of a multiprotein complex equivalent of the SWI/SNF complex that acts by remodeling the chromatin by catalyzing an ATP-dependent alteration in the structure of nucleosomal DNA. Represses embryonic genes in leaves and controls shoot development and flowering. Activates flower homeotic genes. The association of BRM with its target genes requires REF6. Necessary to acquire heat stress (HS) memory, by globally binding to HS memory genes. This chain is ATP-dependent helicase BRM, found in Arabidopsis thaliana (Mouse-ear cress).